The following is a 309-amino-acid chain: Aspartate carbamoyltransferase catalytic subunit (309 aa).

Carbamoyl phosphate is bound by residues Arg57 and Thr58. L-aspartate is bound at residue Lys86. Residues Arg107, His135, and Gln138 each coordinate carbamoyl phosphate. The L-aspartate site is built by Arg168 and Arg229. Residues Leu269 and Pro270 each coordinate carbamoyl phosphate.

This sequence belongs to the aspartate/ornithine carbamoyltransferase superfamily. ATCase family. In terms of assembly, heterooligomer of catalytic and regulatory chains.

The enzyme catalyses carbamoyl phosphate + L-aspartate = N-carbamoyl-L-aspartate + phosphate + H(+). The protein operates within pyrimidine metabolism; UMP biosynthesis via de novo pathway; (S)-dihydroorotate from bicarbonate: step 2/3. Functionally, catalyzes the condensation of carbamoyl phosphate and aspartate to form carbamoyl aspartate and inorganic phosphate, the committed step in the de novo pyrimidine nucleotide biosynthesis pathway. The sequence is that of Aspartate carbamoyltransferase catalytic subunit from Methanopyrus kandleri (strain AV19 / DSM 6324 / JCM 9639 / NBRC 100938).